The chain runs to 182 residues: Adenine phosphoribosyltransferase (182 aa).

Belongs to the purine/pyrimidine phosphoribosyltransferase family. Homodimer.

It localises to the cytoplasm. The catalysed reaction is AMP + diphosphate = 5-phospho-alpha-D-ribose 1-diphosphate + adenine. It functions in the pathway purine metabolism; AMP biosynthesis via salvage pathway; AMP from adenine: step 1/1. Its function is as follows. Catalyzes a salvage reaction resulting in the formation of AMP, that is energically less costly than de novo synthesis. This is Adenine phosphoribosyltransferase from Saccharopolyspora erythraea (strain ATCC 11635 / DSM 40517 / JCM 4748 / NBRC 13426 / NCIMB 8594 / NRRL 2338).